The sequence spans 382 residues: Elongation factor Tu (382 aa).

GTP is bound by residues 1-7 (HVDHGKT), 62-66 (DCPGH), and 117-120 (NKVD). The region spanning 1 to 190 (HVDHGKTTLT…AVDEYIPTPQ (190 aa)) is the tr-type G domain. T7 is a binding site for Mg(2+).

This sequence belongs to the TRAFAC class translation factor GTPase superfamily. Classic translation factor GTPase family. EF-Tu/EF-1A subfamily. As to quaternary structure, monomer.

It is found in the cytoplasm. It catalyses the reaction GTP + H2O = GDP + phosphate + H(+). GTP hydrolase that promotes the GTP-dependent binding of aminoacyl-tRNA to the A-site of ribosomes during protein biosynthesis. In Chloroflexus aurantiacus, this protein is Elongation factor Tu.